Here is a 128-residue protein sequence, read N- to C-terminus: Protein BEX2 (128 aa).

Arg50 carries the omega-N-methylarginine modification. Positions 107–128 (SLRAVSTDPPHHDHHDEFCLMP) are disordered. Over residues 115–128 (PPHHDHHDEFCLMP) the composition is skewed to basic and acidic residues. The tract at residues 117 to 121 (HHDHH) is his cluster. Cys125 is a binding site for Zn(2+).

Belongs to the BEX family. As to quaternary structure, interacts with LMO2, possibly leading to regulate the transcriptional activity of a DNA-binding complex containing LMO2. Interacts with OMP. As to expression, expressed in central nervous system, with high level in pituitary, cerebellum and temporal lobe. Widely expressed in breast cancer cell lines.

The protein localises to the cytoplasm. It localises to the nucleus. Regulator of mitochondrial apoptosis and G1 cell cycle in breast cancer. Protects the breast cancer cells against mitochondrial apoptosis and this effect is mediated through the modulation of BCL2 protein family, which involves the positive regulation of anti-apoptotic member BCL2 and the negative regulation of pro-apoptotic members BAD, BAK1 and PUMA. Required for the normal cell cycle progression during G1 in breast cancer cells through the regulation of CCND1 and CDKN1A. Regulates the level of PP2A regulatory subunit B and PP2A phosphatase activity. In absence of reductive stress, acts as a pseudosubstrate for the CRL2(FEM1B) complex: associates with FEM1B via zinc, thereby preventing association between FEM1B and its substrates. In Homo sapiens (Human), this protein is Protein BEX2 (BEX2).